The following is a 219-amino-acid chain: Ribose-5-phosphate isomerase A (219 aa).

Residues 28–31, 81–84, and 94–97 each bind substrate; these read TGST, DGAD, and KGGG. The Proton acceptor role is filled by E103. K121 provides a ligand contact to substrate.

It belongs to the ribose 5-phosphate isomerase family. In terms of assembly, homodimer.

The catalysed reaction is aldehydo-D-ribose 5-phosphate = D-ribulose 5-phosphate. It participates in carbohydrate degradation; pentose phosphate pathway; D-ribose 5-phosphate from D-ribulose 5-phosphate (non-oxidative stage): step 1/1. Its function is as follows. Catalyzes the reversible conversion of ribose-5-phosphate to ribulose 5-phosphate. The protein is Ribose-5-phosphate isomerase A of Photobacterium profundum (strain SS9).